The following is a 407-amino-acid chain: Putative cystathionine beta-lyase (407 aa).

Position 237 is an N6-(pyridoxal phosphate)lysine (Lys-237).

It belongs to the class-II pyridoxal-phosphate-dependent aminotransferase family. MalY/PatB cystathionine beta-lyase subfamily. Requires pyridoxal 5'-phosphate as cofactor.

The catalysed reaction is L,L-cystathionine + H2O = L-homocysteine + pyruvate + NH4(+). It carries out the reaction an S-substituted L-cysteine + H2O = a thiol + pyruvate + NH4(+). It functions in the pathway amino-acid biosynthesis; L-methionine biosynthesis via de novo pathway; L-homocysteine from L-cystathionine: step 1/1. The chain is Putative cystathionine beta-lyase from Mycobacterium tuberculosis (strain CDC 1551 / Oshkosh).